The following is a 495-amino-acid chain: Protein adenylyltransferase Fic (495 aa).

A disordered region spans residues 1–27; the sequence is MGTEAEQPSPPSPPAQQQEQTNPPLWN. A helical transmembrane segment spans residues 36-55; it reads LYRLVLFFIAGSLAAWTIHA. TPR repeat units lie at residues 121 to 154 and 155 to 189; these read ALVS…APRH and PEVL…SPSN. Residues 246–251 carry the Inhibitory (S/T)XXXE(G/N) motif motif; the sequence is SVGIEG. Residues Glu250 and 331 to 334 contribute to the ATP site; that span reads VGGH. The Fido domain maps to 300–435; sequence ITIKDILELH…IRPFVRFIAD (136 aa). His378 is an active-site residue. ATP contacts are provided by residues 382 to 389, 414 to 415, and Asn422; these read DGNGRTSR and YY.

Belongs to the fic family. Homodimer.

The protein localises to the membrane. It catalyses the reaction L-tyrosyl-[protein] + ATP = O-(5'-adenylyl)-L-tyrosyl-[protein] + diphosphate. The enzyme catalyses L-threonyl-[protein] + ATP = 3-O-(5'-adenylyl)-L-threonyl-[protein] + diphosphate. The catalysed reaction is 3-O-(5'-adenylyl)-L-threonyl-[protein] + H2O = L-threonyl-[protein] + AMP + H(+). The side chain of Glu-250 determines which of the two opposing activities (AMPylase or de-AMPylase) will take place. In response to endoplasmic reticulum stress, mediates de-AMPylase activity. Adenylyltransferase activity is inhibited by the inhibitory helix present at the N-terminus: Glu-250 binds ATP and competes with ATP-binding at Arg-389, thereby preventing adenylyltransferase activity. In unstressed cells, disengagement of Glu-250 promotes adenylyltransferase activity. Activation dissociates ATP-binding from Glu-250, allowing ordered binding of the entire ATP moiety with the alpha-phosphate in an orientation that is productive for accepting an incoming target hydroxyl side chain. Protein that can both mediate the addition of adenosine 5'-monophosphate (AMP) to specific residues of target proteins (AMPylation), and the removal of the same modification from target proteins (de-AMPylation), depending on the context. The side chain of Glu-250 determines which of the two opposing activities (AMPylase or de-AMPylase) will take place. Acts as a key regulator of the unfolded protein response (UPR) by mediating AMPylation or de-AMPylation of Hsc70-3/BiP. In unstressed cells, acts as an adenylyltransferase by mediating AMPylation of Hsc70-3/BiP at 'Thr-518', thereby inactivating it. In response to endoplasmic reticulum stress, acts as a phosphodiesterase by mediating removal of ATP (de-AMPylation) from Hsc70-3/BiP at 'Thr-518', leading to restore HSPA5/BiP activity. This chain is Protein adenylyltransferase Fic, found in Drosophila yakuba (Fruit fly).